A 243-amino-acid chain; its full sequence is NAD-dependent protein deacetylase (243 aa).

Residues 1–243 form the Deacetylase sirtuin-type domain; the sequence is MRNDLETLKH…VSVVKSLMTE (243 aa). The NAD(+) site is built by alanine 24, phenylalanine 35, arginine 36, glutamine 105, isoleucine 107, aspartate 108, and histidine 123. Phenylalanine 35 contributes to the nicotinamide binding site. Positions 107 and 108 each coordinate nicotinamide. Histidine 123 functions as the Proton acceptor in the catalytic mechanism. 4 residues coordinate Zn(2+): cysteine 131, cysteine 134, cysteine 151, and cysteine 154. Positions 192, 193, 215, and 232 each coordinate NAD(+).

The protein belongs to the sirtuin family. Class U subfamily. It depends on Zn(2+) as a cofactor.

The protein resides in the cytoplasm. It carries out the reaction N(6)-acetyl-L-lysyl-[protein] + NAD(+) + H2O = 2''-O-acetyl-ADP-D-ribose + nicotinamide + L-lysyl-[protein]. In terms of biological role, NAD-dependent protein deacetylase which modulates the activities of several enzymes which are inactive in their acetylated form. This chain is NAD-dependent protein deacetylase, found in Staphylococcus aureus (strain MSSA476).